The chain runs to 699 residues: Probable xyloglucan glycosyltransferase 12 (699 aa).

2 consecutive transmembrane segments (helical) span residues 126–146 and 194–214; these read CLKV…AAYF and IVLF…CFWI. The active site involves Asp280. The substrate site is built by Asp339 and Asp341. Asp433 is an active-site residue. The next 2 membrane-spanning stretches (helical) occupy residues 511–531 and 536–556; these read LILP…TMFV and LPAW…ILPA. The segment at 616–646 is disordered; that stretch reads EKTTKHQRGVSAPETEAEKKAEKTKRKKKKH. Glycyl lysine isopeptide (Lys-Gly) (interchain with G-Cter in ubiquitin) cross-links involve residues Lys617 and Lys620. Ser626 is modified (phosphoserine). Over residues 637–646 the composition is skewed to basic residues; sequence EKTKRKKKKH. 2 helical membrane-spanning segments follow: residues 649–668 and 674–694; these read IYMK…TRSL and IHFY…LDLI.

The protein belongs to the glycosyltransferase 2 family. Plant cellulose synthase-like C subfamily. Homodimer. Mainly expressed in roots, flowers and seeds, and, at very low levels, in seedlings, leaves and stems.

The protein resides in the golgi apparatus membrane. Probable beta-1,4-glucan synthase rather involved in the synthesis of the xyloglucan backbone than cellulose. Seems to work simultaneously with xyloglucan 6-xylosyltransferase. Xyloglucan is a noncellulosic polysaccharides of plant cell wall and consists of a glucan backbone substituted by xylose, galactose and fucose. The sequence is that of Probable xyloglucan glycosyltransferase 12 from Arabidopsis thaliana (Mouse-ear cress).